A 698-amino-acid polypeptide reads, in one-letter code: MKPWIAMVCCLVFFLTTECSHSKPKTHRKDEDKFQISLQKHEFRPRQGKCDGLCSSSSSCNQSCPWNFRGEIVFTCNQNKWQKTIETCTSLSVDTLFQRIHPAASLSLASSSVFPMSLIGNAAPVHIGNVFQGIQKYCPEDYVCIVDAVKSSAVTSGNIAFIVELLKNISSNLQTSGIHDNVNWKKMKNYGKVANHILGPTAISNWAFIANKNASSDLLESVNSFAKKLQIQGKSESIVDELFIQTKGSRISHSSSEHSLSLSVPRYNATEDVLVVIEIPRQALQELSFNASQAIVVAFPTLGAILKEVHRPNTSLQKPIDDLILSLVLPEGLNEIILTFDKINKSQSTSSQCVSWDPATGQWDESPCTVMSDINSTVKCRCRHTKAVTSFSILMSSKPVKNTILNHITFIGLSISIFSLVLCLVIEAIVWSRVVVTEISYMRHVCIVNIAVSLLTANVWFIIGSNFSANVQEDHKWCVAVTFLCHFFFLSLFFWMLFKALLIVYGILVVFRRMMKSRMMAIGFAIGYGCPLVIAVITVTVTEPGEGYTRKDACWLNWNQTKALFAFAIPALAIVAVNLLVVLAVAINTQRPLIGSSKSQDMAIVFRISKNVAILTPLLGLTWGFGLTTLLEGVHLVFHIIFALLNAFQGFFILLFGTIMDHKIRDALRMRVSSLKGKSRAAEKVSLSPANGSRILNR.

The N-terminal stretch at 1–19 is a signal peptide; that stretch reads MKPWIAMVCCLVFFLTTEC. Residues 20–409 lie on the Extracellular side of the membrane; sequence SHSKPKTHRK…VKNTILNHIT (390 aa). N-linked (GlcNAc...) asparagine glycans are attached at residues N61, N168, N213, N268, N290, N344, and N375. In terms of domain architecture, GAIN-B spans 250–401; the sequence is RISHSSSEHS…SILMSSKPVK (152 aa). 2 disulfide bridges follow: C353/C380 and C368/C382. Residues 353-401 form a GPS region; the sequence is CVSWDPATGQWDESPCTVMSDINSTVKCRCRHTKAVTSFSILMSSKPVK. The chain crosses the membrane as a helical span at residues 410–430; sequence FIGLSISIFSLVLCLVIEAIV. At 431–444 the chain is on the cytoplasmic side; the sequence is WSRVVVTEISYMRH. Residues 445–465 traverse the membrane as a helical segment; it reads VCIVNIAVSLLTANVWFIIGS. A glycan (N-linked (GlcNAc...) asparagine) is linked at N466. Over 466-486 the chain is Extracellular; the sequence is NFSANVQEDHKWCVAVTFLCH. A helical membrane pass occupies residues 487–507; sequence FFFLSLFFWMLFKALLIVYGI. The Cytoplasmic portion of the chain corresponds to 508–518; sequence LVVFRRMMKSR. Residues 519–539 traverse the membrane as a helical segment; it reads MMAIGFAIGYGCPLVIAVITV. Over 540–566 the chain is Extracellular; that stretch reads TVTEPGEGYTRKDACWLNWNQTKALFA. N-linked (GlcNAc...) asparagine glycosylation is present at N559. Residues 567-587 traverse the membrane as a helical segment; sequence FAIPALAIVAVNLLVVLAVAI. Residues 588–611 lie on the Cytoplasmic side of the membrane; the sequence is NTQRPLIGSSKSQDMAIVFRISKN. A helical transmembrane segment spans residues 612 to 632; that stretch reads VAILTPLLGLTWGFGLTTLLE. At 633–635 the chain is on the extracellular side; it reads GVH. Residues 636–656 form a helical membrane-spanning segment; the sequence is LVFHIIFALLNAFQGFFILLF. Residues 657 to 698 lie on the Cytoplasmic side of the membrane; that stretch reads GTIMDHKIRDALRMRVSSLKGKSRAAEKVSLSPANGSRILNR.

This sequence belongs to the G-protein coupled receptor 2 family. Adhesion G-protein coupled receptor (ADGR) subfamily. Expressed in squamous epithelia.

It localises to the membrane. In terms of biological role, orphan receptor. The sequence is that of Adhesion G protein-coupled receptor F4 (Adgrf4) from Mus musculus (Mouse).